We begin with the raw amino-acid sequence, 332 residues long: 2,3-diketo-L-gulonate reductase (332 aa).

The active-site Proton donor is the His-44. Residues 168 to 174 (ITMVDMS), 224 to 225 (WK), and 304 to 306 (GHE) contribute to the NAD(+) site.

It belongs to the LDH2/MDH2 oxidoreductase family. DlgD subfamily. Homodimer.

It is found in the cytoplasm. It catalyses the reaction 3-dehydro-L-gulonate + NAD(+) = 2,3-dioxo-L-gulonate + NADH + H(+). The catalysed reaction is 3-dehydro-L-gulonate + NADP(+) = 2,3-dioxo-L-gulonate + NADPH + H(+). Functionally, catalyzes the reduction of 2,3-diketo-L-gulonate in the presence of NADH, to form 3-keto-L-gulonate. In Escherichia coli O139:H28 (strain E24377A / ETEC), this protein is 2,3-diketo-L-gulonate reductase.